The primary structure comprises 501 residues: Leukocyte receptor cluster member 9 (501 aa).

Disordered regions lie at residues 1-43 (MGSR…PAPP), 61-86 (RQPHPGAPAPPGREAQPEAGAKKPPL), 203-234 (GQEAQAAPKRGSTRPLCTGHQEPGVEEPGELE), and 281-300 (QALGVPGGSAETTEAEWGPA). Residues 40–67 (PAPPPACRFFLEGRCRFGARCRQPHPGA) form a C3H1-type zinc finger.

This is Leukocyte receptor cluster member 9 (LENG9) from Homo sapiens (Human).